Here is a 287-residue protein sequence, read N- to C-terminus: Ribonuclease Z (287 aa).

Zn(2+) contacts are provided by histidine 64, histidine 66, aspartate 68, histidine 69, histidine 124, aspartate 191, and histidine 250. The active-site Proton acceptor is aspartate 68.

Belongs to the RNase Z family. In terms of assembly, homodimer. Zn(2+) is required as a cofactor.

It carries out the reaction Endonucleolytic cleavage of RNA, removing extra 3' nucleotides from tRNA precursor, generating 3' termini of tRNAs. A 3'-hydroxy group is left at the tRNA terminus and a 5'-phosphoryl group is left at the trailer molecule.. In terms of biological role, zinc phosphodiesterase, which displays some tRNA 3'-processing endonuclease activity. Probably involved in tRNA maturation, by removing a 3'-trailer from precursor tRNA. This chain is Ribonuclease Z, found in Pyrobaculum calidifontis (strain DSM 21063 / JCM 11548 / VA1).